Reading from the N-terminus, the 109-residue chain is Large ribosomal subunit protein uL24 (109 aa).

The protein belongs to the universal ribosomal protein uL24 family. Part of the 50S ribosomal subunit.

One of two assembly initiator proteins, it binds directly to the 5'-end of the 23S rRNA, where it nucleates assembly of the 50S subunit. In terms of biological role, one of the proteins that surrounds the polypeptide exit tunnel on the outside of the subunit. In Ehrlichia chaffeensis (strain ATCC CRL-10679 / Arkansas), this protein is Large ribosomal subunit protein uL24.